A 131-amino-acid polypeptide reads, in one-letter code: Peptide methionine sulfoxide reductase MsrB (131 aa).

The region spanning 8-130 (LEEWRAMLDP…NSVCLDLVPR (123 aa)) is the MsrB domain. Residues C47, C50, C96, and C99 each contribute to the Zn(2+) site. The active-site Nucleophile is C119.

Belongs to the MsrB Met sulfoxide reductase family. Zn(2+) serves as cofactor.

The catalysed reaction is L-methionyl-[protein] + [thioredoxin]-disulfide + H2O = L-methionyl-(R)-S-oxide-[protein] + [thioredoxin]-dithiol. This Pseudomonas fluorescens (strain Pf0-1) protein is Peptide methionine sulfoxide reductase MsrB.